A 224-amino-acid chain; its full sequence is Orotidine 5'-phosphate decarboxylase (224 aa).

Substrate contacts are provided by residues D10, K32, 59 to 68 (DLKLHDIPNT), T115, R175, Q184, G204, and R205. Residue K61 is the Proton donor of the active site.

This sequence belongs to the OMP decarboxylase family. Type 1 subfamily. Homodimer.

It carries out the reaction orotidine 5'-phosphate + H(+) = UMP + CO2. The protein operates within pyrimidine metabolism; UMP biosynthesis via de novo pathway; UMP from orotate: step 2/2. In terms of biological role, catalyzes the decarboxylation of orotidine 5'-monophosphate (OMP) to uridine 5'-monophosphate (UMP). This is Orotidine 5'-phosphate decarboxylase from Sphingopyxis alaskensis (strain DSM 13593 / LMG 18877 / RB2256) (Sphingomonas alaskensis).